The sequence spans 108 residues: Tetrahydromethanopterin S-methyltransferase subunit B (108 aa).

Residues 81–101 (FFGFWISLSILTLGLILVIGL) traverse the membrane as a helical segment.

This sequence belongs to the MtrB family. As to quaternary structure, the complex is composed of 8 subunits; MtrA, MtrB, MtrC, MtrD, MtrE, MtrF, MtrG and MtrH.

The protein localises to the cell membrane. The enzyme catalyses 5-methyl-5,6,7,8-tetrahydromethanopterin + coenzyme M + 2 Na(+)(in) = 5,6,7,8-tetrahydromethanopterin + methyl-coenzyme M + 2 Na(+)(out). It functions in the pathway one-carbon metabolism; methanogenesis from CO(2); methyl-coenzyme M from 5,10-methylene-5,6,7,8-tetrahydromethanopterin: step 2/2. Functionally, part of a complex that catalyzes the formation of methyl-coenzyme M and tetrahydromethanopterin from coenzyme M and methyl-tetrahydromethanopterin. This is an energy-conserving, sodium-ion translocating step. This Methanococcus aeolicus (strain ATCC BAA-1280 / DSM 17508 / OCM 812 / Nankai-3) protein is Tetrahydromethanopterin S-methyltransferase subunit B.